Here is a 517-residue protein sequence, read N- to C-terminus: Alpha,alpha-trehalose-phosphate synthase [UDP-forming] 1 (517 aa).

The D-glucose 6-phosphate site is built by tyrosine 98 and aspartate 152. UDP is bound by residues arginine 288 and lysine 293. UDP-alpha-D-glucose contacts are provided by arginine 288 and lysine 293. Residue arginine 326 coordinates D-glucose 6-phosphate. 387–395 (DGMNLVAYE) lines the UDP-alpha-D-glucose pocket. 391-395 (LVAYE) lines the UDP pocket. Residues 486-517 (FHAKKASFSDNNSENGEPSNGVETPAQEQVAQ) are disordered. Polar residues predominate over residues 493–517 (FSDNNSENGEPSNGVETPAQEQVAQ).

This sequence belongs to the glycosyltransferase 20 family.

The enzyme catalyses D-glucose 6-phosphate + UDP-alpha-D-glucose = alpha,alpha-trehalose 6-phosphate + UDP + H(+). It functions in the pathway carbohydrate biosynthesis. Synthase catalytic subunit of the trehalose synthase complex that catalyzes the production of trehalose from glucose-6-phosphate and UDP-alpha-D-glucose in a two step process. The chain is Alpha,alpha-trehalose-phosphate synthase [UDP-forming] 1 from Aspergillus niger.